Reading from the N-terminus, the 347-residue chain is Putative [LysW]-L-2-aminoadipate/[LysW]-L-glutamate phosphate reductase (347 aa).

Residue 9-12 (SGYI) participates in NADP(+) binding. Residue C149 is part of the active site. N314 serves as a coordination point for NADP(+).

This sequence belongs to the NAGSA dehydrogenase family. Type 1 subfamily. LysY sub-subfamily.

It localises to the cytoplasm. The catalysed reaction is [amino-group carrier protein]-C-terminal-N-(1-carboxy-5-oxopentan-1-yl)-L-glutamine + phosphate + NADP(+) = [amino-group carrier protein]-C-terminal-N-(1-carboxy-5-phosphooxy-5-oxopentan-1-yl)-L-glutamine + NADPH + H(+). It catalyses the reaction [amino-group carrier protein]-C-terminal-gamma-(L-glutamyl-5-semialdehyde)-L-glutamate + phosphate + NADP(+) = [amino-group carrier protein]-C-terminal-gamma-(5-phospho-L-glutamyl)-L-glutamate + NADPH + H(+). It functions in the pathway amino-acid biosynthesis; L-lysine biosynthesis via AAA pathway; L-lysine from L-alpha-aminoadipate (Thermus route): step 3/5. Its pathway is amino-acid biosynthesis; L-arginine biosynthesis. Functionally, involved in both the arginine and lysine biosynthetic pathways. This is Putative [LysW]-L-2-aminoadipate/[LysW]-L-glutamate phosphate reductase from Picrophilus torridus (strain ATCC 700027 / DSM 9790 / JCM 10055 / NBRC 100828 / KAW 2/3).